We begin with the raw amino-acid sequence, 193 residues long: Acyl carrier protein phosphodiesterase (193 aa).

This sequence belongs to the AcpH family.

It catalyses the reaction holo-[ACP] + H2O = apo-[ACP] + (R)-4'-phosphopantetheine + H(+). Converts holo-ACP to apo-ACP by hydrolytic cleavage of the phosphopantetheine prosthetic group from ACP. The polypeptide is Acyl carrier protein phosphodiesterase (Escherichia coli O6:K15:H31 (strain 536 / UPEC)).